We begin with the raw amino-acid sequence, 86 residues long: Small ribosomal subunit protein bS16 (86 aa).

It belongs to the bacterial ribosomal protein bS16 family.

This chain is Small ribosomal subunit protein bS16, found in Bordetella petrii (strain ATCC BAA-461 / DSM 12804 / CCUG 43448).